Here is a 423-residue protein sequence, read N- to C-terminus: Serine hydroxymethyltransferase (423 aa).

(6S)-5,6,7,8-tetrahydrofolate-binding positions include L120 and 124–126 (GHL). An N6-(pyridoxal phosphate)lysine modification is found at K229. (6S)-5,6,7,8-tetrahydrofolate is bound at residue 353 to 355 (SPF).

Belongs to the SHMT family. As to quaternary structure, homodimer. Pyridoxal 5'-phosphate serves as cofactor.

The protein localises to the cytoplasm. The catalysed reaction is (6R)-5,10-methylene-5,6,7,8-tetrahydrofolate + glycine + H2O = (6S)-5,6,7,8-tetrahydrofolate + L-serine. It functions in the pathway one-carbon metabolism; tetrahydrofolate interconversion. The protein operates within amino-acid biosynthesis; glycine biosynthesis; glycine from L-serine: step 1/1. Its function is as follows. Catalyzes the reversible interconversion of serine and glycine with tetrahydrofolate (THF) serving as the one-carbon carrier. This reaction serves as the major source of one-carbon groups required for the biosynthesis of purines, thymidylate, methionine, and other important biomolecules. Also exhibits THF-independent aldolase activity toward beta-hydroxyamino acids, producing glycine and aldehydes, via a retro-aldol mechanism. This chain is Serine hydroxymethyltransferase, found in Prochlorococcus marinus subsp. pastoris (strain CCMP1986 / NIES-2087 / MED4).